The primary structure comprises 123 residues: Loki profilin-3 (123 aa).

The protein belongs to the Asgard profilin family.

Its subcellular location is the cytoplasm. It is found in the cytoskeleton. In terms of biological role, binds to actin and affects the structure of the cytoskeleton. At high concentrations inhibits spontaneous rabbit actin nucleation. This strongly suggests this archaea has a profilin-regulated actin system, and actin-type genes can be identified in this organism. The sequence is that of Loki profilin-3 from Lokiarchaeum sp. (strain GC14_75).